Consider the following 530-residue polypeptide: Estrogen receptor beta (530 aa).

Positions 1–148 (MEIKNSPSSL…SPSAKRDAHF (148 aa)) are modulating. At Ser-61 the chain carries Phosphoserine; alternate. Ser-61 carries O-linked (GlcNAc) serine; alternate glycosylation. Phosphoserine; by MAPK is present on residues Ser-87 and Ser-105. 2 consecutive NR C4-type zinc fingers follow at residues 149-169 (CAVCSDYASGYHYGVWSCEGC) and 185-209 (CPATNQCTIDKNRRKSCQACRLRKC). The segment at residues 149–214 (CAVCSDYASG…RLRKCYEVGM (66 aa)) is a DNA-binding region (nuclear receptor). An NR LBD domain is found at 264 to 498 (SPEQLVLTLL…DLLLEMLNAH (235 aa)). Over residues 506–515 (SISGSECCST) the composition is skewed to polar residues. The interval 506–530 (SISGSECCSTEDSKSKEGSQNLQSQ) is disordered.

The protein belongs to the nuclear hormone receptor family. NR3 subfamily. In terms of assembly, binds DNA as a homodimer. Can form a heterodimer with ESR1. Interacts with NCOA1, NCOA3, NCOA5 and NCOA6 coactivators, leading to a strong increase of transcription of target genes. Interacts with UBE1C and AKAP13. Interacts with DNTTIP2. Interacts with CCDC62 in the presence of estradiol/E2; this interaction seems to enhance the transcription of target genes. Interacts with DNAAF4. Interacts with PRMT2. Interacts with CCAR2 (via N-terminus) in a ligand-independent manner. Interacts with RBM39, in the presence of estradiol (E2). Interacts with STUB1/CHIP. Phosphorylation at Ser-87 and Ser-105 recruits NCOA1. In terms of tissue distribution, expressed in prostate, ovary, Leydig cells and in epithelium of the efferent ductules and of the initial segment of the epididymis.

The protein localises to the nucleus. Its function is as follows. Nuclear hormone receptor. Binds estrogens with an affinity similar to that of ESR1/ER-alpha, and activates expression of reporter genes containing estrogen response elements (ERE) in an estrogen-dependent manner. In Mus musculus (Mouse), this protein is Estrogen receptor beta (Esr2).